The sequence spans 132 residues: Sodium/calcium exchanger regulatory protein 1 (132 aa).

Residues R126 and Y128 each contribute to the (9Z)-hexadecenoate site.

This sequence belongs to the calycin superfamily. Fatty-acid binding protein (FABP) family. In terms of assembly, interacts with Na(+)/Ca(2+) exchanger NCXSQ1; ReP1-NCXSQ phosphorylation does not affect the interaction. Post-translationally, phosphorylated. Phosphorylation may result in the release of the bound fatty acid. Expressed in the optic nerve (at protein level).

Its subcellular location is the cytoplasm. It localises to the membrane. In terms of biological role, binds and may transport fatty acids such as palmitoleate. Also binds poly-phosphoinositides including phosphatidylinositol 4-phosphate (PtdIns(4)P), phosphatidylinositol 4,5-bisphosphate (PtdIns(4,5)P2) and phosphatidylinositol 3,4,5-trisphosphate (PtdIns(3,4,5)P3), and phosphatidic acid. When phosphorylated, stimulates the activity of optic nerve Na(+)/Ca(2+) exchanger. This is Sodium/calcium exchanger regulatory protein 1 from Doryteuthis pealeii (Longfin inshore squid).